A 102-amino-acid chain; its full sequence is Large ribosomal subunit protein uL24c (102 aa).

Belongs to the universal ribosomal protein uL24 family. Part of the 50S ribosomal subunit.

The protein resides in the plastid. Its subcellular location is the chloroplast. One of two assembly initiator proteins, it binds directly to the 5'-end of the 23S rRNA, where it nucleates assembly of the 50S subunit. This chain is Large ribosomal subunit protein uL24c (rpl24), found in Rhodomonas salina (Cryptomonas salina).